A 216-amino-acid polypeptide reads, in one-letter code: DDB1- and CUL4-associated factor 16 (216 aa).

The tract at residues 1–42 (MGPRNPSPDHLSESESEEEENISYLNESSGEEWDSSEEEDSM) is disordered. Positions 29-41 (SGEEWDSSEEEDS) are enriched in acidic residues. At Lys61 the chain carries N6-acetyllysine.

Interacts with DDB1 and CUL4A.

The protein localises to the nucleus. Its pathway is protein modification; protein ubiquitination. Functionally, functions as a substrate recognition component for CUL4-DDB1 E3 ubiquitin-protein ligase complex, which mediates ubiquitination and proteasome-dependent degradation of nuclear proteins. This chain is DDB1- and CUL4-associated factor 16, found in Homo sapiens (Human).